Reading from the N-terminus, the 211-residue chain is MITGKLITVEGPDGAGKTTVLEQLIPLLKQKVAQDILTTREPGGVAISEHIRELILDINHTAMDPKTELLLYIAARRQHLVEKVLPALEAGQLVFIDRFIDSSVAYQGAGRGLTKADIQWLNEFATDGLEPDLTLYFDVPSEIGLARINANQQREINRLDLETIEIHQRVRKGYLALAKEHPKRIVTIDATKPLKEVVSVALEHVLALLLA.

Residue 11–18 (GPDGAGKT) coordinates ATP.

It belongs to the thymidylate kinase family.

The catalysed reaction is dTMP + ATP = dTDP + ADP. Its function is as follows. Phosphorylation of dTMP to form dTDP in both de novo and salvage pathways of dTTP synthesis. The protein is Thymidylate kinase of Streptococcus pyogenes serotype M49 (strain NZ131).